Reading from the N-terminus, the 56-residue chain is Large ribosomal subunit protein bL32 (56 aa).

A disordered region spans residues 1-40; the sequence is MAVQQNKKSRSKRGMRRSHDSLGTAQLSVDATSGELHRRH. The span at 7–16 shows a compositional bias: basic residues; that stretch reads KKSRSKRGMR. A compositionally biased stretch (polar residues) spans 21 to 31; that stretch reads SLGTAQLSVDA.

It belongs to the bacterial ribosomal protein bL32 family.

This chain is Large ribosomal subunit protein bL32, found in Shewanella halifaxensis (strain HAW-EB4).